The following is a 123-amino-acid chain: Probable non-functional immunoglobulin lambda variable 11-55 (123 aa).

The signal sequence occupies residues 1-19 (MALTPLLLLLLSHCTGSLS). The interval 20 to 44 (RPVLTQPPSLSASPGATARLPCTLS) is framework-1. Residues 21 to 123 (PVLTQPPSLS…YCQVYESSAN (103 aa)) enclose the Ig-like domain. The cysteines at positions 41 and 115 are disulfide-linked. The segment at 45–53 (SDLSVGGKN) is complementarity-determining-1. The tract at residues 54–70 (MFWYQQKLGSSPRLFLY) is framework-2. The interval 71-77 (HYSDSDK) is complementarity-determining-2. The segment at 78–115 (QLGPGVPSRVSGSKETSSNTAFLLISGLQPEDEADYYC) is framework-3. The complementarity-determining-3 stretch occupies residues 116–123 (QVYESSAN).

In terms of assembly, immunoglobulins are composed of two identical heavy chains and two identical light chains; disulfide-linked.

It localises to the secreted. It is found in the cell membrane. Functionally, probable non-functional open reading frame (ORF) of V region of the variable domain of immunoglobulin light chains. Non-functional ORF generally cannot participate in the synthesis of a productive immunoglobulin chain due to altered V-(D)-J or switch recombination and/or splicing site (at mRNA level) and/or conserved amino acid change (protein level). Immunoglobulins, also known as antibodies, are membrane-bound or secreted glycoproteins produced by B lymphocytes. In the recognition phase of humoral immunity, the membrane-bound immunoglobulins serve as receptors which, upon binding of a specific antigen, trigger the clonal expansion and differentiation of B lymphocytes into immunoglobulins-secreting plasma cells. Secreted immunoglobulins mediate the effector phase of humoral immunity, which results in the elimination of bound antigens. The antigen binding site is formed by the variable domain of one heavy chain, together with that of its associated light chain. Thus, each immunoglobulin has two antigen binding sites with remarkable affinity for a particular antigen. The variable domains are assembled by a process called V-(D)-J rearrangement and can then be subjected to somatic hypermutations which, after exposure to antigen and selection, allow affinity maturation for a particular antigen. The polypeptide is Probable non-functional immunoglobulin lambda variable 11-55 (Homo sapiens (Human)).